Here is a 361-residue protein sequence, read N- to C-terminus: Chorismate synthase (361 aa).

Residues Arg48 and Arg54 each contribute to the NADP(+) site. Residues 125–127 (RSS), 238–239 (NA), Gly278, 293–297 (KPTSS), and Arg319 contribute to the FMN site.

This sequence belongs to the chorismate synthase family. In terms of assembly, homotetramer. FMNH2 is required as a cofactor.

The enzyme catalyses 5-O-(1-carboxyvinyl)-3-phosphoshikimate = chorismate + phosphate. It functions in the pathway metabolic intermediate biosynthesis; chorismate biosynthesis; chorismate from D-erythrose 4-phosphate and phosphoenolpyruvate: step 7/7. Functionally, catalyzes the anti-1,4-elimination of the C-3 phosphate and the C-6 proR hydrogen from 5-enolpyruvylshikimate-3-phosphate (EPSP) to yield chorismate, which is the branch point compound that serves as the starting substrate for the three terminal pathways of aromatic amino acid biosynthesis. This reaction introduces a second double bond into the aromatic ring system. The sequence is that of Chorismate synthase from Methylobacillus flagellatus (strain ATCC 51484 / DSM 6875 / VKM B-1610 / KT).